We begin with the raw amino-acid sequence, 426 residues long: Elongation factor 1-alpha (426 aa).

The tr-type G domain occupies 5-221 (KPHINLAVIG…NALKEPEKPT (217 aa)). Residues 14-21 (GHIDHGKS) form a G1 region. A GTP-binding site is contributed by 14–21 (GHIDHGKS). Mg(2+) is bound at residue serine 21. A G2 region spans residues 70-74 (GITID). A G3 region spans residues 91–94 (DCPG). Residues 91-95 (DCPGH) and 146-149 (NKMD) contribute to the GTP site. The tract at residues 146-149 (NKMD) is G4. The segment at 185–187 (SAF) is G5.

It belongs to the TRAFAC class translation factor GTPase superfamily. Classic translation factor GTPase family. EF-Tu/EF-1A subfamily.

Its subcellular location is the cytoplasm. It catalyses the reaction GTP + H2O = GDP + phosphate + H(+). Its function is as follows. GTP hydrolase that promotes the GTP-dependent binding of aminoacyl-tRNA to the A-site of ribosomes during protein biosynthesis. The protein is Elongation factor 1-alpha of Methanocella arvoryzae (strain DSM 22066 / NBRC 105507 / MRE50).